Reading from the N-terminus, the 503-residue chain is ATP synthase subunit alpha, chloroplastic (503 aa).

An ATP-binding site is contributed by 170–177 (GDRQTGKT).

Belongs to the ATPase alpha/beta chains family. F-type ATPases have 2 components, CF(1) - the catalytic core - and CF(0) - the membrane proton channel. CF(1) has five subunits: alpha(3), beta(3), gamma(1), delta(1), epsilon(1). CF(0) has four main subunits: a, b, b' and c.

The protein localises to the plastid. Its subcellular location is the chloroplast thylakoid membrane. The catalysed reaction is ATP + H2O + 4 H(+)(in) = ADP + phosphate + 5 H(+)(out). In terms of biological role, produces ATP from ADP in the presence of a proton gradient across the membrane. The alpha chain is a regulatory subunit. This chain is ATP synthase subunit alpha, chloroplastic, found in Trieres chinensis (Marine centric diatom).